The chain runs to 342 residues: L-threonine 3-dehydrogenase (342 aa).

C38 provides a ligand contact to Zn(2+). Catalysis depends on charge relay system residues T40 and H43. Residues H63, E64, C93, C96, C99, and C107 each coordinate Zn(2+). Residues I175, D195, R200, 262 to 264 (LGI), and 286 to 287 (IY) each bind NAD(+).

This sequence belongs to the zinc-containing alcohol dehydrogenase family. As to quaternary structure, homotetramer. Zn(2+) is required as a cofactor.

The protein resides in the cytoplasm. The enzyme catalyses L-threonine + NAD(+) = (2S)-2-amino-3-oxobutanoate + NADH + H(+). It functions in the pathway amino-acid degradation; L-threonine degradation via oxydo-reductase pathway; glycine from L-threonine: step 1/2. In terms of biological role, catalyzes the NAD(+)-dependent oxidation of L-threonine to 2-amino-3-ketobutyrate. The sequence is that of L-threonine 3-dehydrogenase from Aeromonas salmonicida (strain A449).